Here is a 396-residue protein sequence, read N- to C-terminus: MAEKEHYVRTKPHVNIGTIGHVDHGKTTLTAAITTVLAEKGLAKAEDYSQIDAAPEEKERGITINTAHVEYETEKRHYAHMDAPGHADYIKNMITGAAQMDGAILVVAATDGPMPQTREHILLARQVGVNYIVVFLNKCDLVDDPELIDLVEMEVRDLLTEYDYPGDDIPVVRGSALKALEGDKEAQEQILKLMDTVDEYIPTPERQTDKPFLMPVEDVFTITGRGTVASGRIDRGTVKVGDEVEIVGLVDKVLKSVVTGLEMFHKTLDSGEAGDNVGVLLRGIDRDQVVRGQVLAAPGSIQTHNKFKAQVYVLKKEEGGRHTPFFSDYRPQFYFHTTDITGEIELPEGTEMVMPGDNTEFTVTLIKPAAIEKGTKFTIREGGRTVGAGQVTEILD.

One can recognise a tr-type G domain in the interval 11–205 (KPHVNIGTIG…TVDEYIPTPE (195 aa)). The G1 stretch occupies residues 20 to 27 (GHVDHGKT). GTP is bound at residue 20 to 27 (GHVDHGKT). Position 27 (T27) interacts with Mg(2+). The G2 stretch occupies residues 61–65 (GITIN). The interval 82–85 (DAPG) is G3. GTP-binding positions include 82–86 (DAPGH) and 137–140 (NKCD). A G4 region spans residues 137 to 140 (NKCD). The tract at residues 175-177 (SAL) is G5.

It belongs to the TRAFAC class translation factor GTPase superfamily. Classic translation factor GTPase family. EF-Tu/EF-1A subfamily. In terms of assembly, monomer.

Its subcellular location is the cytoplasm. The enzyme catalyses GTP + H2O = GDP + phosphate + H(+). In terms of biological role, GTP hydrolase that promotes the GTP-dependent binding of aminoacyl-tRNA to the A-site of ribosomes during protein biosynthesis. The protein is Elongation factor Tu of Lactobacillus helveticus (strain DPC 4571).